The chain runs to 310 residues: Serine/threonine-protein phosphatase 4 catalytic subunit (310 aa).

Residues aspartate 53, histidine 55, aspartate 81, and asparagine 113 each contribute to the Mn(2+) site. Catalysis depends on histidine 114, which acts as the Proton donor. Mn(2+) contacts are provided by histidine 163 and histidine 237. Position 310 is a leucine methyl ester (leucine 310).

The protein belongs to the PPP phosphatase family. PP-4 (PP-X) subfamily. Catalytic subunit of the histone H2A phosphatase complex (HTP-C) containing PPH3, PSY2 and PSY4. Mn(2+) is required as a cofactor.

It is found in the cytoplasm. The protein resides in the nucleus. It catalyses the reaction O-phospho-L-seryl-[protein] + H2O = L-seryl-[protein] + phosphate. It carries out the reaction O-phospho-L-threonyl-[protein] + H2O = L-threonyl-[protein] + phosphate. Functionally, involved in the dephosphorylation and activation of the transcription factor GLN3 in response to nutrient availability. Forms the histone H2A phosphatase complex in association with the regulatory subunits PSY2 and PSY4, which dephosphorylates H2AS128ph (gamma-H2A) that has been displaced from sites of DNA lesions in the double-stranded DNA break repair process. Dephosphorylation is necessary for efficient recovery from the DNA damage checkpoint. This is Serine/threonine-protein phosphatase 4 catalytic subunit (PPH3) from Eremothecium gossypii (strain ATCC 10895 / CBS 109.51 / FGSC 9923 / NRRL Y-1056) (Yeast).